Here is a 501-residue protein sequence, read N- to C-terminus: Cytochrome P450 7A1 (501 aa).

A helical transmembrane segment spans residues 4-24; that stretch reads ISLLGGIVTAVCCCLWLLLGM. Cys-441 contributes to the heme binding site.

This sequence belongs to the cytochrome P450 family. It depends on heme as a cofactor.

It is found in the endoplasmic reticulum membrane. It localises to the microsome membrane. It carries out the reaction cholesterol + reduced [NADPH--hemoprotein reductase] + O2 = 7alpha-hydroxycholesterol + oxidized [NADPH--hemoprotein reductase] + H2O + H(+). The enzyme catalyses 4beta-hydroxycholesterol + reduced [NADPH--hemoprotein reductase] + O2 = 4beta,7alpha-dihydroxycholesterol + oxidized [NADPH--hemoprotein reductase] + H2O + H(+). The catalysed reaction is lathosterol + reduced [NADPH--hemoprotein reductase] + O2 = 7alpha,8alpha-epoxy-5alpha-cholestan-3beta-ol + oxidized [NADPH--hemoprotein reductase] + H2O + H(+). It catalyses the reaction lathosterol + reduced [NADPH--hemoprotein reductase] + O2 = 5alpha-cholestan-7-oxo-3beta-ol + oxidized [NADPH--hemoprotein reductase] + H2O + H(+). It carries out the reaction 7-dehydrocholesterol + reduced [NADPH--hemoprotein reductase] + O2 = 7-oxocholesterol + oxidized [NADPH--hemoprotein reductase] + H2O + H(+). The enzyme catalyses (24S)-hydroxycholesterol + reduced [NADPH--hemoprotein reductase] + O2 = (24S)-7alpha-dihydroxycholesterol + oxidized [NADPH--hemoprotein reductase] + H2O + H(+). The catalysed reaction is (24R)-hydroxycholesterol + reduced [NADPH--hemoprotein reductase] + O2 = (24R)-7alpha-dihydroxycholesterol + oxidized [NADPH--hemoprotein reductase] + H2O + H(+). It functions in the pathway lipid metabolism; bile acid biosynthesis. It participates in steroid metabolism; cholesterol degradation. Its function is as follows. A cytochrome P450 monooxygenase involved in the metabolism of endogenous cholesterol and its oxygenated derivatives (oxysterols). Mechanistically, uses molecular oxygen inserting one oxygen atom into a substrate, and reducing the second into a water molecule, with two electrons provided by NADPH via cytochrome P450 reductase (CPR; NADPH-ferrihemoprotein reductase). Functions as a critical regulatory enzyme of bile acid biosynthesis and cholesterol homeostasis. Catalyzes the hydroxylation of carbon hydrogen bond at 7-alpha position of cholesterol, a rate-limiting step in cholesterol catabolism and bile acid biosynthesis. 7-alpha hydroxylates several oxysterols, including 4beta-hydroxycholesterol and 24-hydroxycholesterol. Catalyzes the oxidation of the 7,8 double bond of 7-dehydrocholesterol and lathosterol with direct and predominant formation of the 7-keto derivatives. This chain is Cytochrome P450 7A1 (CYP7A1), found in Sus scrofa (Pig).